The chain runs to 158 residues: UPF0178 protein Rpal_2485 (158 aa).

Belongs to the UPF0178 family.

This Rhodopseudomonas palustris (strain TIE-1) protein is UPF0178 protein Rpal_2485.